Here is a 164-residue protein sequence, read N- to C-terminus: Large ribosomal subunit protein bL19 (164 aa).

Residues 144–164 (EAEKQTEVQAEPKIEKSEEKK) are disordered.

Belongs to the bacterial ribosomal protein bL19 family.

In terms of biological role, this protein is located at the 30S-50S ribosomal subunit interface and may play a role in the structure and function of the aminoacyl-tRNA binding site. The protein is Large ribosomal subunit protein bL19 of Pelagibacter ubique (strain HTCC1062).